We begin with the raw amino-acid sequence, 1361 residues long: Cell migration-inducing and hyaluronan-binding protein (1361 aa).

An N-terminal signal peptide occupies residues 1 to 30; sequence MGAAGRQDFLFKAMLTISWLTLTCFPGATS. Residues 44-166 form the G8 domain; sequence QPWNPGHDQD…KKLSWTFLNK (123 aa). N-linked (GlcNAc...) asparagine glycosylation is found at Asn119, Asn165, Asn312, Asn370, and Asn420. One can recognise a GG-type lectin 1 domain in the interval 176–317; the sequence is GGYFFERSWG…GEYFNVSLSS (142 aa). Residues 295 to 591 are necessary for its endoplasmic reticulum (ER) retention and interaction with HSPA5; it reads AAARVFKLFQ…IHHTFSRCVT (297 aa). 4 PbH1 repeats span residues 572 to 594, 595 to 617, 719 to 741, and 798 to 819; these read DPPT…TVHG, SNGL…FTED, IPLG…IIDN, and GGDV…TLAS. 2 N-linked (GlcNAc...) asparagine glycosylation sites follow: Asn889 and Asn921. The GG-type lectin 2 domain maps to 1227–1361; it reads NDFAYIEVDG…PIPVVKKKKL (135 aa).

Belongs to the CEMIP family. As to quaternary structure, interacts with EPHA2 and ITPR3. Interacts with HSPA5/BIP; the interaction induces calcium leakage from the endoplasmic reticulum and cell migration. Interacts with clathrin heavy chain/CLTC. N-glycosylated; glycosylation is not necessary for HA-binding. As to expression, expressed in dermal and in synovial fibroblasts. Strongly expressed in gastric cancers compared with the paired normal tissues. Strongly expressed in both ductal carcinoma and invasive breast cancer cells compared with benign epithelial cells (at protein level). Strongly expressed in brain, placenta, prostate, breast, lung and testis. Expressed in fibroblasts, epithelial cells and cancer cells. In ear, it is specifically expressed in inner ear. Expressed in cochlea and vestibule tissues. Strongly expressed in gastric cancers compared with the paired normal tissues. Strongly expressed in colon adenocarcinomas compared with normal colonic mucosas. Strongly expressed in breast cancer as compared to normal breast tissue.

Its subcellular location is the nucleus. It is found in the cytoplasm. The protein localises to the endoplasmic reticulum. It localises to the cell membrane. The protein resides in the membrane. Its subcellular location is the clathrin-coated pit. It is found in the secreted. It carries out the reaction Random hydrolysis of (1-&gt;4)-linkages between N-acetyl-beta-D-glucosamine and D-glucuronate residues in hyaluronate.. Activity is up-regulated by histamine. Functionally, mediates depolymerization of hyaluronic acid (HA) via the cell membrane-associated clathrin-coated pit endocytic pathway. Binds to hyaluronic acid. Hydrolyzes high molecular weight hyaluronic acid to produce an intermediate-sized product, a process that may occur through rapid vesicle endocytosis and recycling without intracytoplasmic accumulation or digestion in lysosomes. Involved in hyaluronan catabolism in the dermis of the skin and arthritic synovium. Positively regulates epithelial-mesenchymal transition (EMT), and hence tumor cell growth, invasion and cancer dissemination. In collaboration with HSPA5/BIP, promotes cancer cell migration in a calcium and PKC-dependent manner. May be involved in hearing. This Homo sapiens (Human) protein is Cell migration-inducing and hyaluronan-binding protein.